Consider the following 963-residue polypeptide: Thrombospondin-4 (963 aa).

An N-terminal signal peptide occupies residues 1–26; it reads MPAPRAAAAAFLLLHLVLQPWQRTSA. A Laminin G-like domain is found at 29–194; that stretch reads TPQVFDLLPS…LEELKLVVRG (166 aa). The Cell attachment site motif lies at 138 to 140; the sequence is RGD. The EGF-like 1 domain occupies 288 to 327; the sequence is PTRHCDSSPCFRGVRCTDTRDGFQCGPCPDGYTGNGITCS. Disulfide bonds link Cys292/Cys303, Cys297/Cys312, Cys315/Cys326, Cys332/Cys343, Cys337/Cys352, Cys355/Cys379, Cys385/Cys396, Cys390/Cys405, Cys408/Cys420, Cys426/Cys440, Cys434/Cys450, Cys452/Cys463, Cys479/Cys484, Cys489/Cys509, Cys525/Cys545, Cys548/Cys568, Cys584/Cys604, Cys607/Cys627, Cys645/Cys665, Cys685/Cys705, and Cys721/Cys942. An EGF-like 2; calcium-binding domain is found at 328 to 365; sequence DVDECKYHPCYPGVRCVNLAPGFRCDACPVGFTGPMVQ. Positions 381–418 constitute an EGF-like 3; calcium-binding domain; it reads DVDECQNGACVLNSICINTLGSYRCGPCKPGYTGDQTR. An EGF-like 4 domain is found at 422–464; that stretch reads TERSCRNPEQNPCSVHAQCIEERQGDVTCVCGVGWAGDGYVCG. TSP type-3 repeat units follow at residues 465–497, 498–533, 534–556, 557–592, 593–615, 616–653, 654–693, and 694–729; these read KDVD…NSGQ, EDAD…NIDQ, RNSD…NNDQ, KDTD…NRDQ, QDRD…NPNQ, SDVD…NSSQ, LDTD…NPAQ, and EDSN…EITL. The short motif at 564–566 is the Cell attachment site element; the sequence is RGD. A disordered region spans residues 579–676; that stretch reads NILDNCPRVP…DDDDNDGIPD (98 aa). 2 N-linked (GlcNAc...) asparagine glycosylation sites follow: Asn614 and Asn650. Polar residues predominate over residues 642 to 654; that stretch reads TDNCPTVINSSQL. Residues 662 to 673 are compositionally biased toward acidic residues; the sequence is GDECDDDDDNDG. Residues 733–947 form the TSP C-terminal domain; the sequence is RAYQTVVLDP…LKYRCNDTIP (215 aa). N-linked (GlcNAc...) asparagine glycosylation occurs at Asn943.

Belongs to the thrombospondin family. As to quaternary structure, homopentamer; disulfide-linked. Interacts with PTBP3. Interacts (via EGF-like 3; calcium-binding domain) with ATF6 and facilitates its processing, activation and nuclear translocation. Interacts with NOTCH1. Heart. Up-regulated in the heart in response to ischemic injury and pathology (at protein level). Astrocytes; expressed at high levels in subventricular zone (SVZ)-derived astrocytes and at low levels in cortical astrocytes. In response to peripheral nerve injury, significantly up-regulated in the dorsal spinal cord (at protein level).

It localises to the endoplasmic reticulum. The protein localises to the sarcoplasmic reticulum. The protein resides in the secreted. It is found in the extracellular space. Its subcellular location is the extracellular matrix. Its function is as follows. Adhesive glycoprotein that mediates cell-to-cell and cell-to-matrix interactions and is involved in various processes including cellular proliferation, migration, adhesion and attachment, inflammatory response to CNS injury, regulation of vascular inflammation and adaptive responses of the heart to pressure overload and in myocardial function and remodeling. Binds to structural extracellular matrix (ECM) proteins and modulates the ECM in response to tissue damage, contributing to cardioprotective and adaptive ECM remodeling. Plays a role in ER stress response, via its interaction with the activating transcription factor 6 alpha (ATF6) which produces adaptive ER stress response factors and protects myocardium from pressure overload. May contribute to spinal presynaptic hypersensitivity and neuropathic pain states after peripheral nerve injury. May play a role in regulating protective astrogenesis from the subventricular zone (SVZ) niche after injury in a NOTCH1-dependent manner. This is Thrombospondin-4 (Thbs4) from Mus musculus (Mouse).